The chain runs to 305 residues: Putative lipid kinase SaurJH9_0749 (305 aa).

A DAGKc domain is found at 3-139; the sequence is NKYTHGVLFY…YDVIKINNQY (137 aa). Residues Ser44, 74–80, and Thr101 each bind ATP; that span reads GDGTVNE. The Mg(2+) site is built by Ser220, Asp223, and Glu225. Glu281 acts as the Proton acceptor in catalysis.

This sequence belongs to the diacylglycerol/lipid kinase family. It depends on Mg(2+) as a cofactor.

In terms of biological role, may catalyze the ATP-dependent phosphorylation of lipids other than diacylglycerol (DAG). In Staphylococcus aureus (strain JH9), this protein is Putative lipid kinase SaurJH9_0749.